The following is a 294-amino-acid chain: Shikimate dehydrogenase (NADP(+)) (294 aa).

Shikimate-binding positions include 14–16 (SKS) and threonine 61. Lysine 65 functions as the Proton acceptor in the catalytic mechanism. Residue aspartate 77 coordinates NADP(+). The shikimate site is built by asparagine 86 and aspartate 102. NADP(+) is bound by residues 140–144 (GSGGA) and leucine 235. Residue tyrosine 237 coordinates shikimate. Glycine 259 lines the NADP(+) pocket.

This sequence belongs to the shikimate dehydrogenase family. In terms of assembly, homodimer.

The enzyme catalyses shikimate + NADP(+) = 3-dehydroshikimate + NADPH + H(+). It functions in the pathway metabolic intermediate biosynthesis; chorismate biosynthesis; chorismate from D-erythrose 4-phosphate and phosphoenolpyruvate: step 4/7. Its function is as follows. Involved in the biosynthesis of the chorismate, which leads to the biosynthesis of aromatic amino acids. Catalyzes the reversible NADPH linked reduction of 3-dehydroshikimate (DHSA) to yield shikimate (SA). The chain is Shikimate dehydrogenase (NADP(+)) from Blochmanniella floridana.